A 191-amino-acid polypeptide reads, in one-letter code: dTTP/UTP pyrophosphatase (191 aa).

Aspartate 70 (proton acceptor) is an active-site residue.

This sequence belongs to the Maf family. YhdE subfamily. A divalent metal cation serves as cofactor.

It is found in the cytoplasm. The catalysed reaction is dTTP + H2O = dTMP + diphosphate + H(+). It carries out the reaction UTP + H2O = UMP + diphosphate + H(+). Its function is as follows. Nucleoside triphosphate pyrophosphatase that hydrolyzes dTTP and UTP. May have a dual role in cell division arrest and in preventing the incorporation of modified nucleotides into cellular nucleic acids. In Clostridium novyi (strain NT), this protein is dTTP/UTP pyrophosphatase.